The primary structure comprises 120 residues: Phosphoribosyl-AMP cyclohydrolase (120 aa).

Asp74 lines the Mg(2+) pocket. Cys75 is a binding site for Zn(2+). 2 residues coordinate Mg(2+): Asp76 and Asp78. Residues Cys91 and Cys98 each coordinate Zn(2+).

Belongs to the PRA-CH family. In terms of assembly, homodimer. Requires Mg(2+) as cofactor. The cofactor is Zn(2+).

It is found in the cytoplasm. It carries out the reaction 1-(5-phospho-beta-D-ribosyl)-5'-AMP + H2O = 1-(5-phospho-beta-D-ribosyl)-5-[(5-phospho-beta-D-ribosylamino)methylideneamino]imidazole-4-carboxamide. The protein operates within amino-acid biosynthesis; L-histidine biosynthesis; L-histidine from 5-phospho-alpha-D-ribose 1-diphosphate: step 3/9. Its function is as follows. Catalyzes the hydrolysis of the adenine ring of phosphoribosyl-AMP. This is Phosphoribosyl-AMP cyclohydrolase from Natronomonas pharaonis (strain ATCC 35678 / DSM 2160 / CIP 103997 / JCM 8858 / NBRC 14720 / NCIMB 2260 / Gabara) (Halobacterium pharaonis).